A 340-amino-acid polypeptide reads, in one-letter code: MTDIAEITGINKIGLLSLGAYRPERVVTNDEICERIESSDEWIYTRTGIKTRRFAADEETAQTLAIEAGRKAIANALLTGAEIDAVIVATSTHYLQTPASAPAVATALGAQGVPAFDLSAGCAGFGYAVGVAGDMIRGGSASKVLVIGSEKLSPALDMTDRGNCFIFGDGAGAVVVGETAEQGIGPTVWGSDGSQSNAIRQDIDWMDFAAAPDPEGPRPYLRIEGTSVFRWAAFEMGKVGQRAMEAAKVGPEQIDVFVPHQANTRINELLAKNLHLRADAVIANDIEHTGNTSAASVPLAMETLLSTGAAKPGDLALLIGYGAGLSYAAQVVRMPPVPFE.

Catalysis depends on residues C122 and H260. Residues 261 to 265 (QANTR) form an ACP-binding region. N291 is a catalytic residue.

It belongs to the thiolase-like superfamily. FabH family. Homodimer.

It is found in the cytoplasm. The enzyme catalyses malonyl-[ACP] + acetyl-CoA + H(+) = 3-oxobutanoyl-[ACP] + CO2 + CoA. The protein operates within lipid metabolism; fatty acid biosynthesis. In terms of biological role, catalyzes the condensation reaction of fatty acid synthesis by the addition to an acyl acceptor of two carbons from malonyl-ACP. Catalyzes the first condensation reaction which initiates fatty acid synthesis and may therefore play a role in governing the total rate of fatty acid production. Possesses both acetoacetyl-ACP synthase and acetyl transacylase activities. Its substrate specificity determines the biosynthesis of branched-chain and/or straight-chain of fatty acids. The polypeptide is Beta-ketoacyl-[acyl-carrier-protein] synthase III (Mycobacteroides abscessus (strain ATCC 19977 / DSM 44196 / CCUG 20993 / CIP 104536 / JCM 13569 / NCTC 13031 / TMC 1543 / L948) (Mycobacterium abscessus)).